We begin with the raw amino-acid sequence, 877 residues long: Leucine--tRNA ligase (877 aa).

Positions 43 to 53 (PYPSGRIHMGH) match the 'HIGH' region motif. The 'KMSKS' region signature appears at 628–632 (KMSKS). Lysine 631 contacts ATP.

This sequence belongs to the class-I aminoacyl-tRNA synthetase family.

It localises to the cytoplasm. It carries out the reaction tRNA(Leu) + L-leucine + ATP = L-leucyl-tRNA(Leu) + AMP + diphosphate. The polypeptide is Leucine--tRNA ligase (Brucella canis (strain ATCC 23365 / NCTC 10854 / RM-666)).